We begin with the raw amino-acid sequence, 506 residues long: EPTC-inducible aldehyde dehydrogenase (506 aa).

219 to 225 (GFGVEAG) serves as a coordination point for NAD(+). Catalysis depends on residues E263 and C302.

The protein belongs to the aldehyde dehydrogenase family.

It catalyses the reaction an aldehyde + NAD(+) + H2O = a carboxylate + NADH + 2 H(+). In terms of biological role, degrades all aldehydes potentially generated by N dealkylation of thiocarbamates and may also participate in ethanolamine metabolism and further assimilation of degradation products by thiocarbamate-induced cytochrome P-450. The protein is EPTC-inducible aldehyde dehydrogenase (thcA) of Rhodococcus erythropolis (Arthrobacter picolinophilus).